The following is a 164-amino-acid chain: MRLIGLDGEQLGIVKIADAFRLSEQSDVDLVEIAPNADPPVCRLMDYGKFKYQEQKRQAEARSKQKVIQVKEVKFRPATDEGDYQVKLRNLRRFLEEGDKAKVTLRFRGREMAHQELGMRVLERVRDDLIELAQVEAMPKLEGRQMVMVLAPRKKAVGKPDAAG.

This sequence belongs to the IF-3 family. Monomer.

The protein resides in the cytoplasm. Functionally, IF-3 binds to the 30S ribosomal subunit and shifts the equilibrium between 70S ribosomes and their 50S and 30S subunits in favor of the free subunits, thus enhancing the availability of 30S subunits on which protein synthesis initiation begins. The protein is Translation initiation factor IF-3 of Bordetella bronchiseptica (strain ATCC BAA-588 / NCTC 13252 / RB50) (Alcaligenes bronchisepticus).